The sequence spans 473 residues: ATP synthase subunit beta 2 (473 aa).

158 to 165 (GGAGVGKT) lines the ATP pocket.

The protein belongs to the ATPase alpha/beta chains family. In terms of assembly, F-type ATPases have 2 components, CF(1) - the catalytic core - and CF(0) - the membrane proton channel. CF(1) has five subunits: alpha(3), beta(3), gamma(1), delta(1), epsilon(1). CF(0) has three main subunits: a(1), b(2) and c(9-12). The alpha and beta chains form an alternating ring which encloses part of the gamma chain. CF(1) is attached to CF(0) by a central stalk formed by the gamma and epsilon chains, while a peripheral stalk is formed by the delta and b chains.

It is found in the cell membrane. It catalyses the reaction ATP + H2O + 4 H(+)(in) = ADP + phosphate + 5 H(+)(out). In terms of biological role, produces ATP from ADP in the presence of a proton gradient across the membrane. The catalytic sites are hosted primarily by the beta subunits. The chain is ATP synthase subunit beta 2 from Listeria monocytogenes serotype 4b (strain F2365).